Reading from the N-terminus, the 494-residue chain is Cobyrinate a,c-diamide synthase (494 aa).

One can recognise a GATase cobBQ-type domain in the interval 270 to 475 (KIGVALDEAF…AHLHGVAYRE (206 aa)). Cysteine 352 (nucleophile) is an active-site residue.

The protein belongs to the CobB/CbiA family. It depends on Mg(2+) as a cofactor.

The catalysed reaction is cob(II)yrinate + 2 L-glutamine + 2 ATP + 2 H2O = cob(II)yrinate a,c diamide + 2 L-glutamate + 2 ADP + 2 phosphate + 2 H(+). The enzyme catalyses Ni-sirohydrochlorin + 2 L-glutamine + 2 ATP + 2 H2O = Ni-sirohydrochlorin a,c-diamide + 2 L-glutamate + 2 ADP + 2 phosphate + 2 H(+). It participates in cofactor biosynthesis; adenosylcobalamin biosynthesis; cob(II)yrinate a,c-diamide from sirohydrochlorin (anaerobic route): step 10/10. Its function is as follows. Catalyzes the ATP-dependent amidation of the two carboxylate groups at positions a and c of cobyrinate, using either L-glutamine or ammonia as the nitrogen source (Potential). Involved in the biosynthesis of the unique nickel-containing tetrapyrrole coenzyme F430, the prosthetic group of methyl-coenzyme M reductase (MCR), which plays a key role in methanogenesis and anaerobic methane oxidation. Catalyzes the ATP-dependent amidation of the two carboxylate groups at positions a and c of Ni-sirohydrochlorin, using L-glutamine or ammonia as the nitrogen source. Also able to use sirohydrochlorin as substrate, but only produces a monoamide species in a much slower reaction. Unable to use other metallosirohydrochlorins such as sirohaem and Co-sirohydrochlorin. This is Cobyrinate a,c-diamide synthase from Methanosarcina barkeri (strain Fusaro / DSM 804).